Here is a 610-residue protein sequence, read N- to C-terminus: Elongation factor 4 (610 aa).

The tr-type G domain maps to Ser13–Lys195. Residues Asp25 to Thr30 and Asn142 to Asp145 contribute to the GTP site.

Belongs to the TRAFAC class translation factor GTPase superfamily. Classic translation factor GTPase family. LepA subfamily.

Its subcellular location is the cell inner membrane. The enzyme catalyses GTP + H2O = GDP + phosphate + H(+). In terms of biological role, required for accurate and efficient protein synthesis under certain stress conditions. May act as a fidelity factor of the translation reaction, by catalyzing a one-codon backward translocation of tRNAs on improperly translocated ribosomes. Back-translocation proceeds from a post-translocation (POST) complex to a pre-translocation (PRE) complex, thus giving elongation factor G a second chance to translocate the tRNAs correctly. Binds to ribosomes in a GTP-dependent manner. This chain is Elongation factor 4, found in Rhizobium etli (strain CIAT 652).